The following is a 64-amino-acid chain: Conotoxin Tx3.5-a (64 aa).

An N-terminal signal peptide occupies residues 1–19 (MSKLGVLLTICLLLFPLTA). A propeptide spanning residues 20-47 (LPLDGDQPADQAAERMQAEQHPLFDQKR) is cleaved from the precursor. 3 disulfide bridges follow: cysteine 49/cysteine 58, cysteine 50/cysteine 62, and cysteine 54/cysteine 63. A Cysteine amide modification is found at cysteine 63.

This sequence belongs to the conotoxin M superfamily. In terms of processing, contains 3 disulfide bonds. Post-translationally, two peptides are produced from this precursor. Conotoxin Tx3.5-b is amidated at Cys-63, conotoxin Tx3.5-a has an unmodified C-terminus. Expressed by the venom duct. Is present in all duct parts with a highest content in part 2 (proximal of the venom bulb) and then decreases in concentration toward the end of the duct.

The protein resides in the secreted. This chain is Conotoxin Tx3.5-a, found in Conus textile (Cloth-of-gold cone).